Consider the following 260-residue polypeptide: Small ribosomal subunit protein eS1 (260 aa).

Basic residues predominate over residues 1–18; it reads MAVGKNKRMSKGKKGGKK. The tract at residues 1 to 20 is disordered; that stretch reads MAVGKNKRMSKGKKGGKKKA.

It belongs to the eukaryotic ribosomal protein eS1 family. In terms of assembly, component of the small ribosomal subunit. Mature ribosomes consist of a small (40S) and a large (60S) subunit. The 40S subunit contains about 33 different proteins and 1 molecule of RNA (18S). The 60S subunit contains about 49 different proteins and 3 molecules of RNA (25S, 5.8S and 5S).

It is found in the cytoplasm. In Ostreococcus lucimarinus (strain CCE9901), this protein is Small ribosomal subunit protein eS1.